Reading from the N-terminus, the 159-residue chain is Intron-encoded endonuclease ai4 (159 aa).

This sequence belongs to the LAGLIDADG endonuclease family.

The protein resides in the mitochondrion. Its function is as follows. Mitochondrial DNA endonuclease involved in intron homing. The protein is Intron-encoded endonuclease ai4 (ai4) of Dictyostelium discoideum (Social amoeba).